We begin with the raw amino-acid sequence, 128 residues long: UPF0102 protein BCG_2919c (128 aa).

It belongs to the UPF0102 family.

The polypeptide is UPF0102 protein BCG_2919c (Mycobacterium bovis (strain BCG / Pasteur 1173P2)).